Reading from the N-terminus, the 258-residue chain is MIQIDALPAFNDNYIWLLQDATSRRCAVVDPGDAKPVEAWLAAHPDWRLSDILVTHHHHDHVGGVAALKELTGARVLGPANEKIPARDLALEDGERVEVLGLVFEIFHVPGHTLGHIAYYHPAETPLLFCGDTLFAAGCGRLFEGTPAQMHHSLARLAALPANTRVYCTHEYTLSNLRFALAVEPDNAALRERFEEATRLRERDRITLPSEISLELSTNPFLRVSENSVKKKADQRSGQQNRTPEEVFAVLRAWKDQF.

His-56, His-58, Asp-60, His-61, His-112, Asp-132, and His-170 together coordinate Zn(2+).

It belongs to the metallo-beta-lactamase superfamily. Glyoxalase II family. Monomer. It depends on Zn(2+) as a cofactor.

It catalyses the reaction an S-(2-hydroxyacyl)glutathione + H2O = a 2-hydroxy carboxylate + glutathione + H(+). It participates in secondary metabolite metabolism; methylglyoxal degradation; (R)-lactate from methylglyoxal: step 2/2. Functionally, thiolesterase that catalyzes the hydrolysis of S-D-lactoyl-glutathione to form glutathione and D-lactic acid. The chain is Hydroxyacylglutathione hydrolase from Pseudomonas aeruginosa (strain ATCC 15692 / DSM 22644 / CIP 104116 / JCM 14847 / LMG 12228 / 1C / PRS 101 / PAO1).